The primary structure comprises 368 residues: MGSPLQQLSDAGVAVWLDDISRQRLRSGNLAELIAQRNVVGVTSNPTIFAKALAEGDAYDGQLRDLAVRGVSVEEAVRLITAYDIRWAADVLRPVYEATDGVDGRVSLEVDPRLARDTERTVAEARALWWLVDRPNLMIKIPATVEGLPAITAALAEGISVNVTLIFSLERYRAVMDAFLAGLEQAQQAGRDLSTIHSVASFFVSRVDTEVDKRLSKIATEEAVALRGKTALANARLAYAAYEEVFSSARWTALAQAGARPQRPLWASTGVKDPELPDTLYVTELVAPGTVNTMPQATLDAVADHGTITGDTVRGHYDAARAHLDAVESVGVSMSDVVETLEDEGVDKFVKSWEELLDRVAQQLAAHT.

The active-site Schiff-base intermediate with substrate is Lys-140.

It belongs to the transaldolase family. Type 2 subfamily.

The protein localises to the cytoplasm. It carries out the reaction D-sedoheptulose 7-phosphate + D-glyceraldehyde 3-phosphate = D-erythrose 4-phosphate + beta-D-fructose 6-phosphate. Its pathway is carbohydrate degradation; pentose phosphate pathway; D-glyceraldehyde 3-phosphate and beta-D-fructose 6-phosphate from D-ribose 5-phosphate and D-xylulose 5-phosphate (non-oxidative stage): step 2/3. In terms of biological role, transaldolase is important for the balance of metabolites in the pentose-phosphate pathway. The polypeptide is Transaldolase (Thermobifida fusca (strain YX)).